Reading from the N-terminus, the 394-residue chain is Nuclear hormone receptor family member nhr-103 (394 aa).

Residues Ser-8–Thr-83 constitute a DNA-binding region (nuclear receptor). The NR C4-type zinc finger occupies Cys-11–Cys-31. The segment at Gln-47–Cys-66 adopts an NR C4-type; degenerate zinc-finger fold. An NR LBD domain is found at Tyr-126–Thr-394.

The protein belongs to the nuclear hormone receptor family.

Its subcellular location is the nucleus. Its function is as follows. Orphan nuclear receptor. The polypeptide is Nuclear hormone receptor family member nhr-103 (nhr-103) (Caenorhabditis elegans).